The chain runs to 787 residues: PAN2-PAN3 deadenylation complex subunit pan3 (787 aa).

Positions 1-20 are disordered; it reads MNSGLTPSPSPAVAAAGPAG. The span at 11–20 shows a compositional bias: low complexity; the sequence is PAVAAAGPAG. Residues 23 to 51 form a C3H1-type zinc finger; sequence GSKLKFCRYYAKDRTCFYGDECQFLHDDQ. 3 disordered regions span residues 131-162, 179-210, and 226-291; these read EATY…AAHD, TMSQ…MSQS, and GGPT…PPST. 2 stretches are compositionally biased toward low complexity: residues 143–154 and 200–210; these read NSSSSPSLLNDS and STSRLSNMSQS. The PABPC-interacting motif-2 (PAM-2) signature appears at 185–200; the sequence is KTPNPTASEFIPKGGS. The segment covering 265-290 has biased composition (polar residues); it reads TPNPANYMVPTSASTPVTNSVSQPPS. A pseudokinase domain region spans residues 365-650; that stretch reads QIDQADMPGV…SVNDIMPMIG (286 aa). ATP is bound by residues Arg422, 471–478, and 545–546; these read DFHAGSET and TK. Residues 651-689 adopt a coiled-coil conformation; it reads ARFYTQLDAAQMRNDVIEEDLAKEVQNGRLFRLLAKLGT. Residues 690 to 787 are knob domain; it reads INERPEFQKD…ELVAAANGQL (98 aa).

This sequence belongs to the protein kinase superfamily. PAN3 family. In terms of assembly, homodimer. Forms a heterotrimer with a catalytic subunit pan2 to form the poly(A)-nuclease (PAN) deadenylation complex. Interacts (via PAM-2 motif) with poly(A)-binding protein pabpc1 (via PABC domain), conferring substrate specificity of the enzyme complex. Interacts with the GW182 family proteins tnrc6a, tnrc6b and tnrc6c.

It is found in the cytoplasm. It localises to the P-body. Functionally, regulatory subunit of the poly(A)-nuclease (PAN) deadenylation complex, one of two cytoplasmic mRNA deadenylases involved in general and miRNA-mediated mRNA turnover. PAN specifically shortens poly(A) tails of RNA and the activity is stimulated by poly(A)-binding protein (PABP). PAN deadenylation is followed by rapid degradation of the shortened mRNA tails by the CCR4-NOT complex. Deadenylated mRNAs are then degraded by two alternative mechanisms, namely exosome-mediated 3'-5' exonucleolytic degradation, or deadenylation-dependent mRNA decaping and subsequent 5'-3' exonucleolytic degradation by XRN1. PAN3 acts as a positive regulator for PAN activity, recruiting the catalytic subunit PAN2 to mRNA via its interaction with RNA and PABP, and to miRNA targets via its interaction with GW182 family proteins. This chain is PAN2-PAN3 deadenylation complex subunit pan3, found in Xenopus tropicalis (Western clawed frog).